Reading from the N-terminus, the 149-residue chain is Large ribosomal subunit protein uL16 (149 aa).

It belongs to the universal ribosomal protein uL16 family. Part of the 50S ribosomal subunit.

Functionally, binds 23S rRNA and is also seen to make contacts with the A and possibly P site tRNAs. This Dehalococcoides mccartyi (strain ATCC BAA-2100 / JCM 16839 / KCTC 5957 / BAV1) protein is Large ribosomal subunit protein uL16.